The sequence spans 353 residues: Ubiquinol oxidase 1, mitochondrial (353 aa).

The N-terminal 69 residues, 1 to 69 (MMTRGATRMT…RHFPVMGSRS (69 aa)), are a transit peptide targeting the mitochondrion. Positions 77 to 99 (DKQHDKKAENGSAAATGGGDGGD) are disordered. Residues 178–198 (AMMLETVAAVPGMVGGMLLHC) traverse the membrane as a helical segment. Residues glutamate 182, glutamate 221, and histidine 224 each contribute to the Fe cation site. The chain crosses the membrane as a helical span at residues 240–260 (ALVFAVQGVFFNAYFVTYLLS). Positions 272, 323, and 326 each coordinate Fe cation.

This sequence belongs to the alternative oxidase family. Homodimer; disulfide-linked. Requires Fe cation as cofactor.

Its subcellular location is the mitochondrion inner membrane. The enzyme catalyses 2 a ubiquinol + O2 = 2 a ubiquinone + 2 H2O. Its activity is regulated as follows. Stimulated by reduction of the disulfide bond and the presence of pyruvate. Functionally, catalyzes the cyanide-resistant oxidation of ubiquinol and the reduction of molecular oxygen to water, but does not translocate protons and consequently is not linked to oxidative phosphorylation. May increase respiration when the cytochrome respiratory pathway is restricted, or in response to low temperatures. The chain is Ubiquinol oxidase 1, mitochondrial (AOX1) from Nicotiana tabacum (Common tobacco).